Consider the following 88-residue polypeptide: Small ribosomal subunit protein uS15 (88 aa).

Belongs to the universal ribosomal protein uS15 family. In terms of assembly, part of the 30S ribosomal subunit. Forms a bridge to the 50S subunit in the 70S ribosome, contacting the 23S rRNA.

Functionally, one of the primary rRNA binding proteins, it binds directly to 16S rRNA where it helps nucleate assembly of the platform of the 30S subunit by binding and bridging several RNA helices of the 16S rRNA. Its function is as follows. Forms an intersubunit bridge (bridge B4) with the 23S rRNA of the 50S subunit in the ribosome. This is Small ribosomal subunit protein uS15 from Polaromonas naphthalenivorans (strain CJ2).